Here is a 95-residue protein sequence, read N- to C-terminus: UPF0358 protein BA_4159/GBAA_4159/BAS3861 (95 aa).

It belongs to the UPF0358 family.

This Bacillus anthracis protein is UPF0358 protein BA_4159/GBAA_4159/BAS3861.